Here is a 694-residue protein sequence, read N- to C-terminus: Elongation factor G (694 aa).

Positions 8–287 (EDYRNFGIMA…AVVEFLPAPT (280 aa)) constitute a tr-type G domain. GTP-binding positions include 17–24 (AHIDAGKT), 86–90 (DTPGH), and 140–143 (NKMD).

Belongs to the TRAFAC class translation factor GTPase superfamily. Classic translation factor GTPase family. EF-G/EF-2 subfamily.

The protein localises to the cytoplasm. Functionally, catalyzes the GTP-dependent ribosomal translocation step during translation elongation. During this step, the ribosome changes from the pre-translocational (PRE) to the post-translocational (POST) state as the newly formed A-site-bound peptidyl-tRNA and P-site-bound deacylated tRNA move to the P and E sites, respectively. Catalyzes the coordinated movement of the two tRNA molecules, the mRNA and conformational changes in the ribosome. The protein is Elongation factor G of Brucella ovis (strain ATCC 25840 / 63/290 / NCTC 10512).